The following is a 281-amino-acid chain: MNSNIEKSDKPSFIKISEQPSLYDDLEKKSVREILEDINKEDQKVAIAVQKAIPQIEKLVTQIVPRMKQGGRIFYMGAGTSGRLGVLDASEIPPTFGMPPTLIIGLIAGGDTALRNPVENAEDNTTRGWEELTEHNINDKDTVIGIAASGTTPYVIGAMHAAREHGILTGCITSNPNSPMAAEADIPIEMIVGPEYVTGSSRMKSGTGQKMILNMITTSVMIQLGRVKGNKMVNMQLSNRKLVDRGTRMIIEELGLEYDKAKALLLMHGSVKKAIDAYKAG.

In terms of domain architecture, SIS spans 63–226 (IVPRMKQGGR…TTSVMIQLGR (164 aa)). The active-site Proton donor is Glu-91. Glu-122 is a catalytic residue.

The protein belongs to the GCKR-like family. MurNAc-6-P etherase subfamily. In terms of assembly, homodimer.

The enzyme catalyses N-acetyl-D-muramate 6-phosphate + H2O = N-acetyl-D-glucosamine 6-phosphate + (R)-lactate. Its pathway is amino-sugar metabolism; N-acetylmuramate degradation. In terms of biological role, specifically catalyzes the cleavage of the D-lactyl ether substituent of MurNAc 6-phosphate, producing GlcNAc 6-phosphate and D-lactate. The polypeptide is N-acetylmuramic acid 6-phosphate etherase (Bacteroides fragilis (strain ATCC 25285 / DSM 2151 / CCUG 4856 / JCM 11019 / LMG 10263 / NCTC 9343 / Onslow / VPI 2553 / EN-2)).